Here is a 1024-residue protein sequence, read N- to C-terminus: MTMITDSLAVVLQRRDWENPGVTQLNRLAAHPPFASWRNSEEARTDRPSQESRSLNGEWRFAWFPAPEAVPESWLERDLPDADTVIVPSNWQMHGYDAPIYTNVTYPIAVNPPYVPTENPTGCYSLTFNVDESWLQEGQTRIIFDGVNSAFHLWCNGRWVGYGQDSRLPSEFDLSAFLHAGENRLAVMVLRWSDGSYLEDQDMWRMSGIFRDVSLLHKPSTQISDFHVATHFNDDFSRAVLEADVQMYGELRDELRVTVSLWQGETQVASGTAPFGGEIIDERGGYADHVTLRLNVENPKLWSAEIPNLYRAVVELHTADGTLIEAEACDVGFREVRIENGLLLLNGKPLLIRGVNRHEHHPLHGQVMDEQTMVQDILLMKQNNFNAVRCSHYPNHPLWYTLCDHYGLYVVDEANIETHGMVPMNRLTDDPRWLPAMSERVTRMVQRDRNHPSVIIWSLGNESGHGANHDALYRWIKSVDPSRPVQYEGGGADTFATDIICPMYARVDEDQPFPAVPKWSIKKWLSLPGETRPLILCEYAHAMGNSLGGFAKYWQAFRQYPRLQGGFVWDWVDQSLIKYDENGNPWSAYGGDFGDTPNDRQFCMNGLVFADRTPHPALTEAKHQQQFFQFSLSGRTIEVTSEDLFRHSDNELLHWMVALDGKPLASGEVPLDVAPQGKQLIELPELPQPESAGQLWLTVHVVQPNATTWSAAGHISAWQQWRLAENLSVTLPSAPHAIPQLTTSETDFCIELDNKRWQFNRQSGFLSQMWIGDKKQLLTPLRDQFTRAPLDNDIGVSEATRIDPNAWVERWKAAGHYQAEAALLQCTADTLADAVLITTVHAWQHQGKTLFISRKTYRIDGSGQMAITVDVEVASNTPHPARIGLTCQLAQVAERVNWLGLGPQENYPDRLTAACFDRWDLPLSDMYTPYVFPSENGLRCGTRELNYGPHQWRGDFQFNISRYSQQQLMETSHRHLLHAEEGTWLNIDGFHMGIGGDDSWSPSVSAEFHLSAGSYHYQLLWCQK.

Residues N103 and D202 each contribute to the substrate site. A Na(+)-binding site is contributed by D202. The Mg(2+) site is built by E417, H419, and E462. Residues E462 and 538-541 (EYAH) each bind substrate. The active-site Proton donor is the E462. E538 functions as the Nucleophile in the catalytic mechanism. N598 serves as a coordination point for Mg(2+). Residues F602 and N605 each contribute to the Na(+) site. The substrate site is built by N605 and W1000.

It belongs to the glycosyl hydrolase 2 family. Homotetramer. Requires Mg(2+) as cofactor. It depends on Na(+) as a cofactor.

It catalyses the reaction Hydrolysis of terminal non-reducing beta-D-galactose residues in beta-D-galactosides.. In Klebsiella pneumoniae, this protein is Beta-galactosidase.